We begin with the raw amino-acid sequence, 381 residues long: Erythronate-4-phosphate dehydrogenase (381 aa).

Positions 45 and 67 each coordinate substrate. NAD(+) is bound by residues 127 to 128, aspartate 147, and threonine 176; that span reads QV. Arginine 209 is a catalytic residue. Aspartate 233 is a binding site for NAD(+). Glutamate 238 is an active-site residue. The active-site Proton donor is the histidine 255. Glycine 258 is a binding site for NAD(+). Residue tyrosine 259 coordinates substrate.

It belongs to the D-isomer specific 2-hydroxyacid dehydrogenase family. PdxB subfamily. As to quaternary structure, homodimer.

The protein localises to the cytoplasm. It catalyses the reaction 4-phospho-D-erythronate + NAD(+) = (R)-3-hydroxy-2-oxo-4-phosphooxybutanoate + NADH + H(+). It functions in the pathway cofactor biosynthesis; pyridoxine 5'-phosphate biosynthesis; pyridoxine 5'-phosphate from D-erythrose 4-phosphate: step 2/5. Catalyzes the oxidation of erythronate-4-phosphate to 3-hydroxy-2-oxo-4-phosphonooxybutanoate. The sequence is that of Erythronate-4-phosphate dehydrogenase from Vibrio cholerae serotype O1 (strain ATCC 39315 / El Tor Inaba N16961).